The chain runs to 1067 residues: Cadmium/zinc-transporting ATPase HMA2 (1067 aa).

Residues Gln9–Ser75 enclose the HMA domain. Helical transmembrane passes span Tyr94 to Leu114, Phe117 to Ile137, Leu140 to Asp160, Ser162 to Ser182, Tyr313 to Ala333, Leu342 to Ala362, Ile649 to Ala669, and Leu673 to Met693. Disordered regions lie at residues His711–Ser739, His760–His790, and Asn960–Pro996. Over residues His724 to Ser735 the composition is skewed to basic residues. 2 stretches are compositionally biased toward basic and acidic residues: residues His760–His774 and Ser975–Pro996.

This sequence belongs to the cation transport ATPase (P-type) (TC 3.A.3) family. Type IB subfamily. As to expression, in roots, localizes at the pericycle cells. In nodes, localizes in the phloem parenchyma and companion cells of both enlarged and diffuse vascular bundles.

Its subcellular location is the cell membrane. The enzyme catalyses Zn(2+)(in) + ATP + H2O = Zn(2+)(out) + ADP + phosphate + H(+). It catalyses the reaction Cd(2+)(in) + ATP + H2O = Cd(2+)(out) + ADP + phosphate + H(+). Its function is as follows. Zinc/cadmium transporter that plays an essential role in promoting translocation of zinc and cadmium from roots to shoots. May control cadmium loading into xylem. In roots, transports zinc and cadmium from the apoplast to the symplast to facilitate translocation via the phloem. In nodes, functions to load zinc and cadmium to the phloem for the preferential distribution to the upper nodes and panicles. This is Cadmium/zinc-transporting ATPase HMA2 from Oryza sativa subsp. japonica (Rice).